Consider the following 281-residue polypeptide: MQPMARGIQRSVTMIEAMVQALQYEFMQNAIVASLLVSLACGLIGSFIVINRMVFISGGVAHAAYGGIGLGYYFAFNPLWGAFVFSLVMALAMGWVARKYQQRSDTLIGVMWALGMAIGIMLIDLTKGYKADVASYLFGSILTVPRQELWLMAGLDMLIIILLFLLYKEFLAISFDPVYATTRNLPVDILYLTLVAAIALTVVMVMQLVGLIMVIALLSIPAAIAGQYVRDVPQMMAVASGLGMVFCGVGLALSYSFNLSSGATIILVASIAYLISLAFRR.

8 helical membrane passes run 30 to 50, 54 to 74, 76 to 96, 106 to 126, 153 to 173, 198 to 218, 235 to 255, and 259 to 279; these read AIVA…FIVI, VFIS…GYYF, FNPL…MGWV, TLIG…IDLT, AGLD…FLAI, IALT…IALL, MMAV…ALSY, and LSSG…SLAF.

It belongs to the ABC-3 integral membrane protein family.

The protein resides in the cell membrane. This is an uncharacterized protein from Synechocystis sp. (strain ATCC 27184 / PCC 6803 / Kazusa).